A 396-amino-acid polypeptide reads, in one-letter code: Acetyl-CoA acetyltransferase (396 aa).

Cys88 (acyl-thioester intermediate) is an active-site residue. Catalysis depends on proton acceptor residues His352 and Cys382.

The protein belongs to the thiolase-like superfamily. Thiolase family. As to quaternary structure, homotetramer.

The enzyme catalyses 2 acetyl-CoA = acetoacetyl-CoA + CoA. It participates in biopolymer metabolism; poly-(R)-3-hydroxybutanoate biosynthesis. Its function is as follows. When expressed in E.coli with Synechocystis PhaB, PhaC and PhaE confers the ability to synthesize up to 12% (w/w) poly(3-hydroxybutyrate) (PHB) depending on the carbon source. The chain is Acetyl-CoA acetyltransferase from Synechocystis sp. (strain ATCC 27184 / PCC 6803 / Kazusa).